A 120-amino-acid polypeptide reads, in one-letter code: Large ribosomal subunit protein uL18 (120 aa).

Belongs to the universal ribosomal protein uL18 family. In terms of assembly, part of the 50S ribosomal subunit; part of the 5S rRNA/L5/L18/L25 subcomplex. Contacts the 5S and 23S rRNAs.

Functionally, this is one of the proteins that bind and probably mediate the attachment of the 5S RNA into the large ribosomal subunit, where it forms part of the central protuberance. The sequence is that of Large ribosomal subunit protein uL18 from Oleidesulfovibrio alaskensis (strain ATCC BAA-1058 / DSM 17464 / G20) (Desulfovibrio alaskensis).